The sequence spans 575 residues: LMVVTSNADRICTGITSSNSPHVVKTATQGEVNVTGVIPLTTTPTKSHFANLKGTQTRGKLCPNCLNCTDLDVALGRPKCMGNIPSAKASILHEVKPGTSGCFPIMHDRTKIRQLPNLLRGYENIRLSARNVTNAETAPGGPYIVGTSGSCPNVTNGNGFFATMAWAVPKNKTATNPLTVEVPYICTKGEDQITVWGFHSDDETQMVKLYGDSKPQKFTSSANGVTTHYVSQIGGFPNQAEDEGLPQSGRIVVDYMVQKPGKTGTIAYQRGVLLPQKVWCASGRRKVIEGSLPLIGEADCLHEKYGGLNKSKPYYTGEHAKAIGNCPIWVKTPLKLANGTKYRPPAKLLKERGFFGAIAGFLEGGWEGMIAGWHGYTSHGAHGVAVAADLKSTQEAINKITKNLFSLSELEVKNLHRLSGAMDELHNEILELDEKVDDLRADTISSQIELAVLLSNEGIINSEDEHLLALERKLKKMLGPSAVEIGNGCFETKHKCNQTCLDRIAAGTFNAGEFSLPTFDSLNITAASLNDDGLDNHTILLYYSTAASSLAVTLMIAIFIVYMVSRDNVSCSICL.

Residues Leu1–Tyr543 are Extracellular-facing. 4 disulfide bridges follow: Cys12–Cys489, Cys68–Cys80, Cys102–Cys151, and Cys496–Cys500. Asn33 and Asn67 each carry an N-linked (GlcNAc...) asparagine; by host glycan. N-linked (GlcNAc...) asparagine; by host glycosylation is found at Asn131, Asn153, Asn171, Asn309, Asn338, Asn497, Asn523, and Asn536. A helical membrane pass occupies residues Ser544–Val564. At Ser565–Leu575 the chain is on the cytoplasmic side. S-palmitoyl cysteine; by host attachment occurs at residues Cys571 and Cys574.

Belongs to the influenza viruses hemagglutinin family. Homotrimer of disulfide-linked HA1-HA2. In terms of processing, palmitoylated. In natural infection, inactive HA is matured into HA1 and HA2 outside the cell by one or more trypsin-like, arginine-specific endoprotease secreted by the bronchial epithelial cells. One identified protease that may be involved in this process is secreted in lungs by club cells.

It localises to the virion membrane. The protein resides in the host apical cell membrane. In terms of biological role, binds to sialic acid-containing receptors on the cell surface, bringing about the attachment of the virus particle to the cell. Plays a major role in the determination of host range restriction and virulence. Class I viral fusion protein. Responsible for penetration of the virus into the cell cytoplasm by mediating the fusion of the membrane of the endocytosed virus particle with the endosomal membrane. Low pH in endosomes induce an irreversible conformational change in HA2, releasing the fusion hydrophobic peptide. Several trimers are required to form a competent fusion pore. The chain is Hemagglutinin from Influenza B virus (strain B/Hong Kong/8/1973).